The sequence spans 500 residues: tRNA (guanine(37)-N(1))-methyltransferase (500 aa).

S-adenosyl-L-methionine contacts are provided by residues histidine 215, 253-254, 281-282, and asparagine 312; these read DL and DA. The disordered stretch occupies residues 463-500; sequence QIVAKKTPKPAPRPLPAKNKTTPDTNKMETDLTKLEMK. Residues 488–500 are compositionally biased toward basic and acidic residues; the sequence is NKMETDLTKLEMK.

Belongs to the class I-like SAM-binding methyltransferase superfamily. TRM5/TYW2 family. As to quaternary structure, monomer.

The protein resides in the mitochondrion matrix. It is found in the nucleus. The protein localises to the cytoplasm. The catalysed reaction is guanosine(37) in tRNA + S-adenosyl-L-methionine = N(1)-methylguanosine(37) in tRNA + S-adenosyl-L-homocysteine + H(+). In terms of biological role, specifically methylates the N1 position of guanosine-37 in various cytoplasmic and mitochondrial tRNAs. Methylation is not dependent on the nature of the nucleoside 5' of the target nucleoside. This is the first step in the biosynthesis of wybutosine (yW), a modified base adjacent to the anticodon of tRNAs and required for accurate decoding. This chain is tRNA (guanine(37)-N(1))-methyltransferase, found in Anopheles darlingi (Mosquito).